The primary structure comprises 166 residues: uncharacterized protein (166 aa).

This is an uncharacterized protein from Saccharomyces cerevisiae (strain ATCC 204508 / S288c) (Baker's yeast).